The chain runs to 196 residues: Imidazoleglycerol-phosphate dehydratase (196 aa).

Belongs to the imidazoleglycerol-phosphate dehydratase family.

It is found in the cytoplasm. The enzyme catalyses D-erythro-1-(imidazol-4-yl)glycerol 3-phosphate = 3-(imidazol-4-yl)-2-oxopropyl phosphate + H2O. It functions in the pathway amino-acid biosynthesis; L-histidine biosynthesis; L-histidine from 5-phospho-alpha-D-ribose 1-diphosphate: step 6/9. This chain is Imidazoleglycerol-phosphate dehydratase, found in Oleidesulfovibrio alaskensis (strain ATCC BAA-1058 / DSM 17464 / G20) (Desulfovibrio alaskensis).